The primary structure comprises 319 residues: Aspartate carbamoyltransferase catalytic subunit (319 aa).

Carbamoyl phosphate-binding residues include R65 and T66. Position 93 (K93) interacts with L-aspartate. The carbamoyl phosphate site is built by R115, H149, and Q152. Residues R182 and R237 each coordinate L-aspartate. 2 residues coordinate carbamoyl phosphate: G278 and P279.

This sequence belongs to the aspartate/ornithine carbamoyltransferase superfamily. ATCase family. Heterododecamer (2C3:3R2) of six catalytic PyrB chains organized as two trimers (C3), and six regulatory PyrI chains organized as three dimers (R2).

The enzyme catalyses carbamoyl phosphate + L-aspartate = N-carbamoyl-L-aspartate + phosphate + H(+). It participates in pyrimidine metabolism; UMP biosynthesis via de novo pathway; (S)-dihydroorotate from bicarbonate: step 2/3. Functionally, catalyzes the condensation of carbamoyl phosphate and aspartate to form carbamoyl aspartate and inorganic phosphate, the committed step in the de novo pyrimidine nucleotide biosynthesis pathway. This chain is Aspartate carbamoyltransferase catalytic subunit, found in Azoarcus sp. (strain BH72).